A 347-amino-acid chain; its full sequence is D-alanine--D-alanine ligase (347 aa).

In terms of domain architecture, ATP-grasp spans 134-332 (KLYAKDLGVK…LAQSLPKTPK (199 aa)). ATP is bound at residue 161–216 (LMNFNFPFIIKPNNAGSSLGVNVVKEEKELVYALDGAFEYSKEVLIEPFIQGVKEY). The Mg(2+) site is built by Asp-288, Glu-300, and Asn-302.

This sequence belongs to the D-alanine--D-alanine ligase family. Mg(2+) serves as cofactor. The cofactor is Mn(2+).

The protein localises to the cytoplasm. The enzyme catalyses 2 D-alanine + ATP = D-alanyl-D-alanine + ADP + phosphate + H(+). It functions in the pathway cell wall biogenesis; peptidoglycan biosynthesis. Cell wall formation. This is D-alanine--D-alanine ligase from Helicobacter pylori (strain ATCC 700392 / 26695) (Campylobacter pylori).